We begin with the raw amino-acid sequence, 311 residues long: 4-hydroxy-tetrahydrodipicolinate synthase (311 aa).

Thr-51 serves as a coordination point for pyruvate. Tyr-140 serves as the catalytic Proton donor/acceptor. The active-site Schiff-base intermediate with substrate is the Lys-168. Ile-209 is a pyruvate binding site.

The protein belongs to the DapA family. Homotetramer; dimer of dimers.

The protein resides in the cytoplasm. It catalyses the reaction L-aspartate 4-semialdehyde + pyruvate = (2S,4S)-4-hydroxy-2,3,4,5-tetrahydrodipicolinate + H2O + H(+). The protein operates within amino-acid biosynthesis; L-lysine biosynthesis via DAP pathway; (S)-tetrahydrodipicolinate from L-aspartate: step 3/4. In terms of biological role, catalyzes the condensation of (S)-aspartate-beta-semialdehyde [(S)-ASA] and pyruvate to 4-hydroxy-tetrahydrodipicolinate (HTPA). This chain is 4-hydroxy-tetrahydrodipicolinate synthase, found in Streptococcus pneumoniae (strain ATCC 700669 / Spain 23F-1).